The sequence spans 347 residues: Heat-inducible transcription repressor HrcA (347 aa).

Belongs to the HrcA family.

Negative regulator of class I heat shock genes (grpE-dnaK-dnaJ and groELS operons). Prevents heat-shock induction of these operons. This is Heat-inducible transcription repressor HrcA from Sorangium cellulosum (strain So ce56) (Polyangium cellulosum (strain So ce56)).